The primary structure comprises 283 residues: ATP phosphoribosyltransferase (283 aa).

Belongs to the ATP phosphoribosyltransferase family. Long subfamily. Mg(2+) serves as cofactor.

The protein resides in the cytoplasm. The enzyme catalyses 1-(5-phospho-beta-D-ribosyl)-ATP + diphosphate = 5-phospho-alpha-D-ribose 1-diphosphate + ATP. It participates in amino-acid biosynthesis; L-histidine biosynthesis; L-histidine from 5-phospho-alpha-D-ribose 1-diphosphate: step 1/9. Feedback inhibited by histidine. Its function is as follows. Catalyzes the condensation of ATP and 5-phosphoribose 1-diphosphate to form N'-(5'-phosphoribosyl)-ATP (PR-ATP). Has a crucial role in the pathway because the rate of histidine biosynthesis seems to be controlled primarily by regulation of HisG enzymatic activity. The sequence is that of ATP phosphoribosyltransferase from Azobacteroides pseudotrichonymphae genomovar. CFP2.